A 538-amino-acid chain; its full sequence is MVKQLKFSEDARQAMLRGVDQLANAVKVTIGPKGRNVVLDKEFTAPLITNDGVTIAKEIELEDPYENMGAKLVQEVANKTNEIAGDGTTTATVLAQAMIQEGLKNVTSGANPVGLRQGIDKAVKVAVEALHENSQKVENKNEIAQVGAISAADEEIGRYISEAMEKVGNDGVITIEESNGLNTELEVVEGMQFDRGYQSPYMVTDSDKMVAELERPYILVTDKKISSFQDILPLLEQVVQSNRPILIVADEVEGDALTNIVLNRMRGTFTAVAVKAPGFGDRRKAMLEDLAILTGAQVITDDLGLDLKDASIDMLGTASKVEVTKDNTTVVDGDGDENSIDARVSQLKSQIEETESDFDREKLQERLAKLAGGVAVIKVGAASETELKERKLRIEDALNSTRAAVEEGIVAGGGTALVNVYQKVSEIEAEGDIETGVNIVLKALTAPVRQIAENAGLEGSVIVERLKNAEPGVGFNAATNEWVNMLEAGIVDPTKVTRSALQHAASVAAMFLTTEAVVASIPEKNNDQPNMGGMPGMM.

Residues 29–32, 86–90, Gly-413, 476–478, and Asp-492 contribute to the ATP site; these read TIGP, DGTTT, and NAA.

The protein belongs to the chaperonin (HSP60) family. In terms of assembly, forms a cylinder of 14 subunits composed of two heptameric rings stacked back-to-back. Interacts with the co-chaperonin GroES.

The protein localises to the cytoplasm. It catalyses the reaction ATP + H2O + a folded polypeptide = ADP + phosphate + an unfolded polypeptide.. Together with its co-chaperonin GroES, plays an essential role in assisting protein folding. The GroEL-GroES system forms a nano-cage that allows encapsulation of the non-native substrate proteins and provides a physical environment optimized to promote and accelerate protein folding. The protein is Chaperonin GroEL of Staphylococcus aureus (strain Mu3 / ATCC 700698).